The sequence spans 483 residues: Betaine aldehyde dehydrogenase (483 aa).

K(+) contacts are provided by Ile-27 and Asp-93. 149-151 (GAW) serves as a coordination point for NAD(+). Lys-161 acts as the Charge relay system in catalysis. 175 to 178 (KPSE) provides a ligand contact to NAD(+). Position 179 (Val-179) interacts with K(+). 228–231 (SVPT) is an NAD(+) binding site. Val-243 provides a ligand contact to K(+). The Proton acceptor role is filled by Glu-249. NAD(+) contacts are provided by Gly-251, Cys-283, and Glu-380. The active-site Nucleophile is Cys-283. Cys-283 carries the cysteine sulfenic acid (-SOH) modification. Positions 450 and 453 each coordinate K(+). Catalysis depends on Glu-457, which acts as the Charge relay system.

This sequence belongs to the aldehyde dehydrogenase family. Dimer of dimers. The cofactor is K(+).

It carries out the reaction betaine aldehyde + NAD(+) + H2O = glycine betaine + NADH + 2 H(+). It functions in the pathway amine and polyamine biosynthesis; betaine biosynthesis via choline pathway; betaine from betaine aldehyde: step 1/1. Functionally, involved in the biosynthesis of the osmoprotectant glycine betaine. Catalyzes the irreversible oxidation of betaine aldehyde to the corresponding acid. In Cereibacter sphaeroides (strain KD131 / KCTC 12085) (Rhodobacter sphaeroides), this protein is Betaine aldehyde dehydrogenase.